Here is an 813-residue protein sequence, read N- to C-terminus: MTEQRRSPNNRALPSPAPTSVPARARRAGGLHAGALRPLVLAMASLSAGAHAQMSGSAIPDLDQVEPVFEAAPKAPPLPVESGELVPRLAEPGKQSDAGSDAPTFIEADRMTGYSERGVELEGHAELRRDGGAIKGDKLTYDQDTDEAFAQGNVRMSRSGTLAVGPEARMKVEANEGYMLSPDYYFQQTGGSGKAERIDFLDKDRSTARHASYTTCSPDNADWYFSANRIDLDNDRQVGVAYGGVLNFFGVPIAAAPAFSFPLNDDRRSGFLPPLMGYGSRSGFDLTTPYYVNIAPNRDLTIYPRLMTERGLQLGGEYRYLGQGYNGRLRAEFLPDDKKTNSNRWAYSIQHNQNLAKGLNAYLNVNRVSDDQYPDDFNRSVSQSTLRQYTQEGGVTYNWQDFTFLARVQKFQTLRPSEPSYERVPQLNGKYIRYDLGGFDVQVEADYTRFRIPLTSTGFQQPQGERMFIQPSISYPIVRAGWYVTPKVTFNATQYQMEAASNTPTVQNNFSRVLPTMSLDSGMTFEREAPTVSRLFGVNYVQTLEPRLFYVYTPFRDQSQFPLFDTVQSDFGYGQIFSENPFTGYDRVADNNKLTGGLTTRLIEADTGIERFRGTIAQRYDFTGQRVQINGTLADPKAGFSDLLAATTIQMFRGYYLDAGVQYNPDSDRINYGNVAVSYRPESRKVINAGYRYRRPTSVTDNTAIDQFEVSSQWPITRRAYGIARFAFDLAASQMVDALAGVEYAADCWVGRVVYQRFRNTTQGYTGRVFLQVEFRGLSKIGSNPLNILRLNVPGYEPVSAKPVPTTQFDHYE.

The disordered stretch occupies residues 1 to 29 (MTEQRRSPNNRALPSPAPTSVPARARRAG). A signal peptide spans 1–52 (MTEQRRSPNNRALPSPAPTSVPARARRAGGLHAGALRPLVLAMASLSAGAHA).

The protein belongs to the LptD family. Component of the lipopolysaccharide transport and assembly complex. Interacts with LptE and LptA.

The protein localises to the cell outer membrane. Its function is as follows. Together with LptE, is involved in the assembly of lipopolysaccharide (LPS) at the surface of the outer membrane. The polypeptide is LPS-assembly protein LptD (Cupriavidus necator (strain ATCC 17699 / DSM 428 / KCTC 22496 / NCIMB 10442 / H16 / Stanier 337) (Ralstonia eutropha)).